We begin with the raw amino-acid sequence, 217 residues long: GrpE protein homolog 1, mitochondrial (217 aa).

The N-terminal 27 residues, 1 to 27 (MAARCVRLARRSLPALALSFRPSPRLL), are a transit peptide targeting the mitochondrion. An N6-acetyllysine; alternate modification is found at Lys94. At Lys94 the chain carries N6-succinyllysine; alternate. At Lys100 the chain carries N6-acetyllysine. Lys120 carries the N6-succinyllysine modification. Lys215 is subject to N6-acetyllysine; alternate. Lys215 is subject to N6-succinyllysine; alternate.

This sequence belongs to the GrpE family. Probable component of the PAM complex at least composed of a mitochondrial HSP70 protein, GRPEL1 or GRPEL2, TIMM44, TIMM16/PAM16 and TIMM14/DNAJC19. Binds to HSP70, HSC70 and HSJ1B. Ubiquitous. Particularly abundant in heart, kidney and liver.

Its subcellular location is the mitochondrion matrix. Functionally, essential component of the PAM complex, a complex required for the translocation of transit peptide-containing proteins from the inner membrane into the mitochondrial matrix in an ATP-dependent manner. Seems to control the nucleotide-dependent binding of mitochondrial HSP70 to substrate proteins. In Rattus norvegicus (Rat), this protein is GrpE protein homolog 1, mitochondrial (Grpel1).